Reading from the N-terminus, the 60-residue chain is Short neurotoxin 1 (60 aa).

4 disulfide bridges follow: Cys-3–Cys-22, Cys-17–Cys-39, Cys-41–Cys-52, and Cys-53–Cys-58.

This sequence belongs to the three-finger toxin family. Short-chain subfamily. Type I alpha-neurotoxin sub-subfamily. As to expression, expressed by the venom gland.

The protein localises to the secreted. Functionally, binds to muscle nicotinic acetylcholine receptor (nAChR) and inhibit acetylcholine from binding to the receptor, thereby impairing neuromuscular transmission. In Hydrophis ornatus (Ornate reef seasnake), this protein is Short neurotoxin 1.